Here is a 262-residue protein sequence, read N- to C-terminus: Type III pantothenate kinase (262 aa).

6–13 (DAGNTNMV) lines the ATP pocket. Substrate is bound by residues tyrosine 100 and 107-110 (GADR). Aspartate 109 serves as the catalytic Proton acceptor. Position 129 (aspartate 129) interacts with K(+). Threonine 132 lines the ATP pocket. Threonine 184 contributes to the substrate binding site.

This sequence belongs to the type III pantothenate kinase family. As to quaternary structure, homodimer. Requires NH4(+) as cofactor. K(+) is required as a cofactor.

It localises to the cytoplasm. It carries out the reaction (R)-pantothenate + ATP = (R)-4'-phosphopantothenate + ADP + H(+). The protein operates within cofactor biosynthesis; coenzyme A biosynthesis; CoA from (R)-pantothenate: step 1/5. Its function is as follows. Catalyzes the phosphorylation of pantothenate (Pan), the first step in CoA biosynthesis. This Clostridium tetani (strain Massachusetts / E88) protein is Type III pantothenate kinase.